The following is a 250-amino-acid chain: 2,3-bisphosphoglycerate-dependent phosphoglycerate mutase (250 aa).

Substrate is bound by residues 10-17 (RHGESQWN), 23-24 (TG), Arg62, 89-92 (ERHY), Lys100, 116-117 (RR), and 185-186 (GN). Catalysis depends on His11, which acts as the Tele-phosphohistidine intermediate. The Proton donor/acceptor role is filled by Glu89.

Belongs to the phosphoglycerate mutase family. BPG-dependent PGAM subfamily. Homodimer.

The catalysed reaction is (2R)-2-phosphoglycerate = (2R)-3-phosphoglycerate. It participates in carbohydrate degradation; glycolysis; pyruvate from D-glyceraldehyde 3-phosphate: step 3/5. Functionally, catalyzes the interconversion of 2-phosphoglycerate and 3-phosphoglycerate. The chain is 2,3-bisphosphoglycerate-dependent phosphoglycerate mutase from Yersinia pseudotuberculosis serotype IB (strain PB1/+).